Reading from the N-terminus, the 120-residue chain is NAD(P)H-quinone oxidoreductase subunit 3 (120 aa).

3 helical membrane-spanning segments follow: residues 1–21 (MFVL…SLVP), 64–84 (MFAL…PWAV), and 89–109 (LGLL…VALV).

The protein belongs to the complex I subunit 3 family. NDH-1 can be composed of about 15 different subunits; different subcomplexes with different compositions have been identified which probably have different functions.

The protein resides in the cellular thylakoid membrane. It carries out the reaction a plastoquinone + NADH + (n+1) H(+)(in) = a plastoquinol + NAD(+) + n H(+)(out). The catalysed reaction is a plastoquinone + NADPH + (n+1) H(+)(in) = a plastoquinol + NADP(+) + n H(+)(out). Functionally, NDH-1 shuttles electrons from an unknown electron donor, via FMN and iron-sulfur (Fe-S) centers, to quinones in the respiratory and/or the photosynthetic chain. The immediate electron acceptor for the enzyme in this species is believed to be plastoquinone. Couples the redox reaction to proton translocation, and thus conserves the redox energy in a proton gradient. Cyanobacterial NDH-1 also plays a role in inorganic carbon-concentration. This is NAD(P)H-quinone oxidoreductase subunit 3 from Trichormus variabilis (strain ATCC 29413 / PCC 7937) (Anabaena variabilis).